The following is a 296-amino-acid chain: Light-independent protochlorophyllide reductase iron-sulfur ATP-binding protein (296 aa).

ATP contacts are provided by residues 39–44 (GIGKST) and lysine 68. Serine 43 lines the Mg(2+) pocket. [4Fe-4S] cluster is bound by residues cysteine 124 and cysteine 158. 209-210 (NR) contacts ATP.

Belongs to the NifH/BchL/ChlL family. As to quaternary structure, homodimer. Protochlorophyllide reductase is composed of three subunits; ChlL, ChlN and ChlB. [4Fe-4S] cluster serves as cofactor.

The catalysed reaction is chlorophyllide a + oxidized 2[4Fe-4S]-[ferredoxin] + 2 ADP + 2 phosphate = protochlorophyllide a + reduced 2[4Fe-4S]-[ferredoxin] + 2 ATP + 2 H2O. It functions in the pathway porphyrin-containing compound metabolism; chlorophyll biosynthesis (light-independent). Component of the dark-operative protochlorophyllide reductase (DPOR) that uses Mg-ATP and reduced ferredoxin to reduce ring D of protochlorophyllide (Pchlide) to form chlorophyllide a (Chlide). This reaction is light-independent. The L component serves as a unique electron donor to the NB-component of the complex, and binds Mg-ATP. In Prochlorococcus marinus (strain SARG / CCMP1375 / SS120), this protein is Light-independent protochlorophyllide reductase iron-sulfur ATP-binding protein.